Here is a 1777-residue protein sequence, read N- to C-terminus: FERM and PDZ domain-containing protein 3 (1777 aa).

The PDZ domain occupies 21 to 98 (QVTVHRDPIY…FIVLTVLHTH (78 aa)). Residues 147–461 (NVLKVFLENG…GYCRLLLDSR (315 aa)) form the FERM domain. 7 disordered regions span residues 491-520 (TGGH…TPPP), 555-574 (ETRP…QGYE), 622-697 (QLGP…GRHL), 832-871 (SLGR…QGER), 1014-1216 (SAPE…PFRL), 1309-1346 (RPQA…LSSP), and 1732-1765 (QQQQ…ATVM). Polar residues predominate over residues 502–511 (YVGSVGTSPR). A compositionally biased stretch (basic and acidic residues) spans 555–564 (ETRPRTKSDP). Residues 649–659 (SEEEEEEEDET) show a composition bias toward acidic residues. Composition is skewed to polar residues over residues 840-850 (PSLQPIATGQS), 1015-1035 (APET…SSPR), 1046-1056 (HLSQQEDSLPV), and 1094-1111 (LQKQ…QLES). A compositionally biased stretch (low complexity) spans 1134–1168 (QSPSCQSRSHSPSCQPHGHSPSSQSRGQSPSCQPR). The span at 1172-1202 (PLRSQAASRQVSTMPSRKLETTLNGAHSTSE) shows a compositional bias: polar residues. Positions 1732-1751 (QQQQQQQQQQQQVAAAAGAA) are enriched in low complexity.

The chain is FERM and PDZ domain-containing protein 3 from Homo sapiens (Human).